The chain runs to 658 residues: Putative endo-beta-N-acetylglucosaminidase (658 aa).

The first 23 residues, 1-23, serve as a signal peptide directing secretion; it reads MKKVRFIFLALLFFLASPEGAMA. Cell wall-binding repeat units follow at residues 42-63, 65-84, 86-105, 124-145, 147-166, 185-206, 208-227, 229-248, 250-271, 273-292, 294-315, 317-336, and 338-359; these read ANEW…DANY, ENEW…GGYM, KSEW…DGKM, IEDW…DGQH, EKEW…GGYL, QQGW…NGNY, DKEW…GGYM, ANEW…DGKM, EKEW…GGYM, and ANEW…DGKI.

Belongs to the glycosyl hydrolase 73 family.

It is found in the secreted. It carries out the reaction an N(4)-(oligosaccharide-(1-&gt;3)-[oligosaccharide-(1-&gt;6)]-beta-D-Man-(1-&gt;4)-beta-D-GlcNAc-(1-&gt;4)-alpha-D-GlcNAc)-L-asparaginyl-[protein] + H2O = an oligosaccharide-(1-&gt;3)-[oligosaccharide-(1-&gt;6)]-beta-D-Man-(1-&gt;4)-D-GlcNAc + N(4)-(N-acetyl-beta-D-glucosaminyl)-L-asparaginyl-[protein]. In terms of biological role, plays an important role in cell wall degradation and cell separation. In Streptococcus pneumoniae serotype 4 (strain ATCC BAA-334 / TIGR4), this protein is Putative endo-beta-N-acetylglucosaminidase (lytB).